The primary structure comprises 369 residues: GTPase Obg (369 aa).

Residues 1 to 159 (MKFIDEARIE…RMLKLELKVL (159 aa)) form the Obg domain. The disordered stretch occupies residues 128–147 (LHFKSSTNRAPRQKTDGKPG). In terms of domain architecture, OBG-type G spans 160-334 (ADVGLLGMPN…LCYAIYDYLA (175 aa)). GTP-binding positions include 166 to 173 (GMPNAGKS), 191 to 195 (FTTLA), 213 to 216 (DIPG), 284 to 287 (NKLD), and 315 to 317 (SAL). 2 residues coordinate Mg(2+): serine 173 and threonine 193.

This sequence belongs to the TRAFAC class OBG-HflX-like GTPase superfamily. OBG GTPase family. Monomer. Requires Mg(2+) as cofactor.

Its subcellular location is the cytoplasm. In terms of biological role, an essential GTPase which binds GTP, GDP and possibly (p)ppGpp with moderate affinity, with high nucleotide exchange rates and a fairly low GTP hydrolysis rate. Plays a role in control of the cell cycle, stress response, ribosome biogenesis and in those bacteria that undergo differentiation, in morphogenesis control. The chain is GTPase Obg from Burkholderia multivorans (strain ATCC 17616 / 249).